Reading from the N-terminus, the 208-residue chain is Protein Nef (208 aa).

The tract at residues 1–33 is disordered; it reads MGGKWSKRMSGWSAVRERMKRAEPAEPAADGVG. Gly2 carries N-myristoyl glycine; by host lipidation. Ser6 is modified (phosphoserine; by host). Basic and acidic residues predominate over residues 15-24; sequence VRERMKRAEP. The segment at 64–67 is acidic; interacts with host PACS1 and PACS2; stabilizes the interaction of NEF/MHC-I with host AP1M1; necessary for MHC-I internalization; it reads EDED. Residues 71–80 are SH3-binding; interaction with Src family tyrosine kinases; the sequence is PVRPQVPLRP. Positions 74-77 match the PxxP; stabilizes the interaction of NEF/MHC-I with host AP1M1; necessary for MHC-I internalization motif; it reads PQVP. A mediates dimerization, Nef-PTE1 interaction region spans residues 110 to 126; that stretch reads DILDLWIHHTQGYFPDW. The binding to ATP6V1H stretch occupies residues 150-182; the sequence is VDPDYVEEANAGENNSLLHPMSQHGMDDPEKEV. A Dileucine internalization motif; necessary for CD4 internalization motif is present at residues 166–167; it reads LL. The Diacidic; necessary for CD4 internalization signature appears at 176-177; it reads DD.

Belongs to the lentivirus primate group Nef protein family. As to quaternary structure, monomer; cytosolic form. Homodimer; membrane bound form. Interacts with Nef associated p21-activated kinase (PAK2); this interaction activates PAK2. Associates with the Nef-MHC-I-AP1 complex; this complex is required for MHC-I internalization. Interacts (via C-terminus) with host PI3-kinase. Interacts with host PACS1; this interaction seems to be weak. Interacts with host PACS2. Interacts with host LCK and MAPK3; these interactions inhibit the kinase activity of the latter. Interacts with host ATP6V1H; this interaction may play a role in CD4 endocytosis. Associates with the CD4-Nef-AP2 complex; this complex is required for CD4 internalization. Interacts with host AP2 subunit alpha and AP2 subunit sigma2. Interacts with TCR-zeta chain; this interaction up-regulates the Fas ligand (FasL) surface expression. Interacts with host HCK, LYN, and SRC; these interactions activate the Src family kinases. Interacts with MAP3K5; this interaction inhibits the Fas and TNFR-mediated death signals. Interacts with beta-COP and PTE1. Interacts with human RACK1; this increases Nef phosphorylation by PKC. Interacts with TP53; this interaction decreases the half-life of TP53, protecting the infected cell against p53-mediated apoptosis. The virion-associated Nef proteins are cleaved by the viral protease to release the soluble C-terminal core protein. Nef is probably cleaved concomitantly with viral structural proteins on maturation of virus particles. Post-translationally, myristoylated. In terms of processing, phosphorylated on serine residues, probably by host PKCdelta and theta.

The protein localises to the host cell membrane. It localises to the virion. The protein resides in the secreted. Its subcellular location is the host Golgi apparatus membrane. Its function is as follows. Factor of infectivity and pathogenicity, required for optimal virus replication. Alters numerous pathways of T-lymphocyte function and down-regulates immunity surface molecules in order to evade host defense and increase viral infectivity. Alters the functionality of other immunity cells, like dendritic cells, monocytes/macrophages and NK cells. Functionally, in infected CD4(+) T-lymphocytes, down-regulates the surface MHC-I, mature MHC-II, CD4, CD28, CCR5 and CXCR4 molecules. Mediates internalization and degradation of host CD4 through the interaction of with the cytoplasmic tail of CD4, the recruitment of AP-2 (clathrin adapter protein complex 2), internalization through clathrin coated pits, and subsequent transport to endosomes and lysosomes for degradation. Diverts host MHC-I molecules to the trans-Golgi network-associated endosomal compartments by an endocytic pathway to finally target them for degradation. MHC-I down-regulation may involve AP-1 (clathrin adapter protein complex 1) or possibly Src family kinase-ZAP70/Syk-PI3K cascade recruited by PACS2. In consequence infected cells are masked for immune recognition by cytotoxic T-lymphocytes. Decreasing the number of immune receptors also prevents reinfection by more HIV particles (superinfection). Down-regulates host SERINC3 and SERINC5 thereby excluding these proteins from the viral particles. Virion infectivity is drastically higher when SERINC3 or SERINC5 are excluded from the viral envelope, because these host antiviral proteins impair the membrane fusion event necessary for subsequent virion penetration. In terms of biological role, bypasses host T-cell signaling by inducing a transcriptional program nearly identical to that of anti-CD3 cell activation. Interaction with TCR-zeta chain up-regulates the Fas ligand (FasL). Increasing surface FasL molecules and decreasing surface MHC-I molecules on infected CD4(+) cells send attacking cytotoxic CD8+ T-lymphocytes into apoptosis. Plays a role in optimizing the host cell environment for viral replication without causing cell death by apoptosis. Protects the infected cells from apoptosis in order to keep them alive until the next virus generation is ready to strike. Inhibits the Fas and TNFR-mediated death signals by blocking MAP3K5/ASK1. Decreases the half-life of TP53, protecting the infected cell against p53-mediated apoptosis. Inhibits the apoptotic signals regulated by the Bcl-2 family proteins through the formation of a Nef/PI3-kinase/PAK2 complex that leads to activation of PAK2 and induces phosphorylation of host BAD. Its function is as follows. Extracellular Nef protein targets CD4(+) T-lymphocytes for apoptosis by interacting with CXCR4 surface receptors. The protein is Protein Nef of Human immunodeficiency virus type 1 group M subtype B (isolate SF162) (HIV-1).